Here is a 265-residue protein sequence, read N- to C-terminus: UPF0354 protein GWCH70_2742 (265 aa).

This sequence belongs to the UPF0354 family.

This chain is UPF0354 protein GWCH70_2742, found in Geobacillus sp. (strain WCH70).